A 235-amino-acid chain; its full sequence is Exosome complex component RRP46 (235 aa).

A disordered region spans residues 1–21; it reads MEGAKRADANLLTDTGTESSP. Residues 12 to 21 are compositionally biased toward polar residues; that stretch reads LTDTGTESSP. 2 positions are modified to phosphoserine: serine 20 and serine 23.

The protein belongs to the RNase PH family. As to quaternary structure, homodimer. Component of the RNA exosome core complex (Exo-9), composed of EXOSC1, EXOSC2, EXOSC3, EXOSC4, EXOSC5, EXOSC6, EXOSC7, EXOSC8 and EXOSC9; within the complex interacts with EXOSC3, EXOSC8, and EXOSC9. The catalytically inactive RNA exosome core complex (Exo-9) associates with the catalytic subunit EXOSC10/RRP6. Exo-9 may associate with DIS3 to form the nucleolar exosome complex, or DIS3L to form the cytoplasmic exosome complex. Exo-9 is formed by a hexameric base ring consisting of the heterodimers EXOSC4-EXOSC9, EXOSC5-EXOSC8 and EXOSC6-EXOSC7, and a cap ring consisting of EXOSC1, EXOSC2 and EXOSC3. The RNA exosome complex associates with cofactors C1D/RRP47, MPHOSPH6/MPP6 and MTREX/MTR4. Interacts with GTPBP1. Interacts with ZC3HAV1. Interacts with DDX17 only in the presence of ZC3HAV1 in an RNA-independent manner.

The protein localises to the nucleus. It is found in the nucleolus. The protein resides in the cytoplasm. Non-catalytic component of the RNA exosome complex which has 3'-&gt;5' exoribonuclease activity and participates in a multitude of cellular RNA processing and degradation events. In the nucleus, the RNA exosome complex is involved in proper maturation of stable RNA species such as rRNA, snRNA and snoRNA, in the elimination of RNA processing by-products and non-coding 'pervasive' transcripts, such as antisense RNA species and promoter-upstream transcripts (PROMPTs), and of mRNAs with processing defects, thereby limiting or excluding their export to the cytoplasm. The RNA exosome may be involved in Ig class switch recombination (CSR) and/or Ig variable region somatic hypermutation (SHM) by targeting AICDA deamination activity to transcribed dsDNA substrates. In the cytoplasm, the RNA exosome complex is involved in general mRNA turnover and specifically degrades inherently unstable mRNAs containing AU-rich elements (AREs) within their 3' untranslated regions, and in RNA surveillance pathways, preventing translation of aberrant mRNAs. It seems to be involved in degradation of histone mRNA. The catalytic inactive RNA exosome core complex of 9 subunits (Exo-9) is proposed to play a pivotal role in the binding and presentation of RNA for ribonucleolysis, and to serve as a scaffold for the association with catalytic subunits and accessory proteins or complexes. In vitro, EXOSC5 does not bind or digest single-stranded RNA and binds to double-stranded DNA without detectable DNase activity. The protein is Exosome complex component RRP46 (Exosc5) of Mus musculus (Mouse).